The chain runs to 1021 residues: INO80 complex subunit D (1021 aa).

Residue Lys-87 forms a Glycyl lysine isopeptide (Lys-Gly) (interchain with G-Cter in SUMO2) linkage. Phosphoserine is present on Ser-132. 5 disordered regions span residues 194–239 (FSTP…PMQG), 514–570 (RGDN…SMPT), 808–844 (RQQY…PHTS), 911–940 (SLST…SVLP), and 976–1021 (QLSS…PSPN). The segment covering 224 to 239 (VCKSPQPQNTSLPMQG) has biased composition (polar residues). Positions 520-554 (KVQHQQQRKPRKKTKPPALTKKHKKKRRRGPRRPQ) are enriched in basic residues. The segment covering 911-926 (SLSTPPTTSNSETTQP) has biased composition (low complexity). Over residues 931–940 (VTPSSSSVLP) the composition is skewed to polar residues. Positions 995–1014 (APPTGFTATGATATSTNNAS) are enriched in low complexity.

The protein belongs to the INO80D family. Component of the chromatin remodeling INO80 complex; specifically part of a complex module associated with the N-terminus of INO80.

The protein localises to the nucleus. Its function is as follows. Putative regulatory component of the chromatin remodeling INO80 complex which is involved in transcriptional regulation, DNA replication and probably DNA repair. In Mus musculus (Mouse), this protein is INO80 complex subunit D.